The primary structure comprises 69 residues: DNA-directed RNA polymerase subunit epsilon (69 aa).

This sequence belongs to the RNA polymerase subunit epsilon family. In terms of assembly, RNAP is composed of a core of 2 alpha, a beta and a beta' subunit. The core is associated with a delta subunit, and at least one of epsilon or omega. When a sigma factor is associated with the core the holoenzyme is formed, which can initiate transcription.

It catalyses the reaction RNA(n) + a ribonucleoside 5'-triphosphate = RNA(n+1) + diphosphate. Functionally, a non-essential component of RNA polymerase (RNAP). This Bacillus velezensis (strain DSM 23117 / BGSC 10A6 / LMG 26770 / FZB42) (Bacillus amyloliquefaciens subsp. plantarum) protein is DNA-directed RNA polymerase subunit epsilon.